The following is a 170-amino-acid chain: Phosphothreonine lyase OspF (170 aa).

Histidine 82 serves as the catalytic Proton donor. Lysine 112 functions as the Proton acceptor in the catalytic mechanism.

It belongs to the phosphothreonine lyase family.

The protein resides in the secreted. Functionally, catalyzes the removal of the phosphate group from the phosphothreonine in the mitogen-activated protein kinases such as MAPK2/ERK2, MAPK3/ERK1, MAPK8 and MAPK14 in an irreversible reaction, thus preventing the downstream phosphorylation of histone H3. This epigenetic modification results in inhibition of the transcription of a specific subset of pro-inflammatory genes, and ultimately to a reduced immune response against the invading pathogen. The diminished immune response enhances the bacterium's ability to disseminate and multiply within the host. The protein is Phosphothreonine lyase OspF (ospF) of Shigella boydii.